A 644-amino-acid polypeptide reads, in one-letter code: Sentrin-specific protease 1 (644 aa).

Positions 1 to 200 (MDDIADRMRM…REIYRQLLQM (200 aa)) are interaction with CCAR2. Residues Ser57, Ser117, Ser132, and Ser157 each carry the phosphoserine modification. The segment at 92–117 (QSANGQWRNSTPSSSSSLQKSRNSRS) is disordered. A compositionally biased stretch (low complexity) spans 99–117 (RNSTPSSSSSLQKSRNSRS). Disordered stretches follow at residues 156 to 184 (PSPS…TAEE) and 283 to 312 (SKDS…NTQS). The Nuclear localization signal signature appears at 171 to 177 (PKKTQRR). The interval 450-613 (LTITRKDIQT…GMFACKYADC (164 aa)) is protease. Active-site residues include His533 and Asp550. Residues 574–577 (KKRK) carry the Nuclear localization signal motif. Residue Cys603 is the Nucleophile of the active site. The Nuclear localization signal signature appears at 628-634 (PYFRKRM). Positions 635 to 644 (VWEILHRKLL) match the Nuclear export signal motif.

Belongs to the peptidase C48 family. Interacts with RBM33; promoting ALKBH5 desumoylation and subsequent activation. As to expression, highly expressed in testis. Expressed at lower levels in thymus, pancreas, spleen, liver, ovary and small intestine.

It is found in the nucleus. It localises to the cytoplasm. In terms of biological role, protease that catalyzes two essential functions in the SUMO pathway. The first is the hydrolysis of an alpha-linked peptide bond at the C-terminal end of the small ubiquitin-like modifier (SUMO) propeptides, SUMO1, SUMO2 and SUMO3 leading to the mature form of the proteins. The second is the deconjugation of SUMO1, SUMO2 and SUMO3 from targeted proteins, by cleaving an epsilon-linked peptide bond between the C-terminal glycine of the mature SUMO and the lysine epsilon-amino group of the target protein. Deconjugates SUMO1 from HIPK2. Deconjugates SUMO1 from HDAC1 and BHLHE40/DEC1, which decreases its transcriptional repression activity. Deconjugates SUMO1 from CLOCK, which decreases its transcriptional activation activity. Deconjugates SUMO2 from MTA1. Inhibits N(6)-methyladenosine (m6A) RNA methylation by mediating SUMO1 deconjugation from METTL3 and ALKBH5: METTL3 inhibits the m6A RNA methyltransferase activity, while ALKBH5 desumoylation promotes m6A demethylation. Desumoylates CCAR2 which decreases its interaction with SIRT1. Deconjugates SUMO1 from GPS2. This is Sentrin-specific protease 1 (SENP1) from Homo sapiens (Human).